Reading from the N-terminus, the 25-residue chain is Oxyopinin-3c (25 aa).

As to expression, expressed by the venom gland.

It localises to the secreted. In terms of biological role, may have cytolytic and antimicrobial activity. The chain is Oxyopinin-3c from Oxyopes takobius (Lynx spider).